The following is a 593-amino-acid chain: UvrABC system protein C (593 aa).

The region spanning 14 to 91 (DSPGCYLHKD…IQENMPKYNI (78 aa)) is the GIY-YIG domain. The region spanning 196 to 231 (NKIVNGLTEKMKSAAMTMEFERAAEYRDLIEAISLL) is the UVR domain.

This sequence belongs to the UvrC family. Interacts with UvrB in an incision complex.

The protein localises to the cytoplasm. Its function is as follows. The UvrABC repair system catalyzes the recognition and processing of DNA lesions. UvrC both incises the 5' and 3' sides of the lesion. The N-terminal half is responsible for the 3' incision and the C-terminal half is responsible for the 5' incision. The protein is UvrABC system protein C of Streptococcus agalactiae serotype V (strain ATCC BAA-611 / 2603 V/R).